The chain runs to 292 residues: MTSLNIMGRKFILERAKRNDNIEEIYTSAYVSLPSSTDTRLPHFKAKEEDCDVYEEGTNLVGKNAKYTYRSLGRHLDFLRPGLRFGGSQSSKYTYYTVEVKIDTVNLPLYKDSRSLDPHVTGTFTIKNLTPVLDKVVTLFEGYVINYNQFPLCSLHWPAEETLDPYMAQRESDCSHWKRFGHFGSDNWSLTERNFGQYNHESAEFMNQRYIYLKWKERFLLDDEEQENLMLDDNHHLEGASFEGFYYVCLDQLTGSVEGYYYHPACELFQKLELVPTNCDALNTYSSGFEIA.

This sequence belongs to the GID4/VID24 family. In terms of assembly, substrate-recognition component of the GID/CTLH ubiquitin ligase complex. In the absence of stress, the complex exists as an inactive anticipatory complex (GID(Ant)), composed of VID30/GID1, the E3 ubiquitin-ligase RMD5/GID2, VID28/GID5, GID8, and the RING-like subunit FYV10/GID9, awaiting a substrate receptor to form the active E3 ligase complex. When cells are shifted to glucose-containing medium, the substrate receptor VID24/GID4 is induced and becomes part of the complex, named GID(SR4). Under osmotic or heat stress, the substrate receptor GID10 is induced and becomes part of the complex, named GID(SR10). Interacts with proteins that have an N-terminal Pro/N-degron, including ART2.

Functionally, substrate-recognition component of the GID E3 ligase complex recruiting N termini and catalyzing ubiquitination of proteins targeted for degradation. GID E3 is regulated through assembly with interchangeable N-degron-binding substrate receptors induced by distinct environmental perturbations. Required for the adaptation to osmotic or heat stress. Required for the regulation of protein levels of the adapter protein ART2, a component of the ART-Rsp5 ubiquitin ligase pathway, part of the plasma membrane quality control. Specific for substrates with an N-terminal Pro (Pro/N-degron), including ART2. Has high affinity for the N-terminal sequence Pro-Tyr-Ile-Thr, and also recognizes nonproline residues such as Met-Tyr-Ile-Thr-Val or Val-Cys-Phe-His. This chain is GID complex substrate-recognition subunit 10, found in Saccharomyces cerevisiae (strain ATCC 204508 / S288c) (Baker's yeast).